The following is a 386-amino-acid chain: Succinate--CoA ligase [ADP-forming] subunit beta (386 aa).

The ATP-grasp domain maps to 9–237 (KEVLRDFGVN…LSAEHPLEVE (229 aa)). ATP is bound by residues Lys45, 52 to 54 (GRG), Val94, and Glu101. Residues Asn192 and Asp206 each contribute to the Mg(2+) site. Residues Asn258 and 315 to 317 (GIT) contribute to the substrate site.

It belongs to the succinate/malate CoA ligase beta subunit family. In terms of assembly, heterotetramer of two alpha and two beta subunits. Requires Mg(2+) as cofactor.

The enzyme catalyses succinate + ATP + CoA = succinyl-CoA + ADP + phosphate. It catalyses the reaction GTP + succinate + CoA = succinyl-CoA + GDP + phosphate. It functions in the pathway carbohydrate metabolism; tricarboxylic acid cycle; succinate from succinyl-CoA (ligase route): step 1/1. Functionally, succinyl-CoA synthetase functions in the citric acid cycle (TCA), coupling the hydrolysis of succinyl-CoA to the synthesis of either ATP or GTP and thus represents the only step of substrate-level phosphorylation in the TCA. The beta subunit provides nucleotide specificity of the enzyme and binds the substrate succinate, while the binding sites for coenzyme A and phosphate are found in the alpha subunit. This is Succinate--CoA ligase [ADP-forming] subunit beta from Deinococcus radiodurans (strain ATCC 13939 / DSM 20539 / JCM 16871 / CCUG 27074 / LMG 4051 / NBRC 15346 / NCIMB 9279 / VKM B-1422 / R1).